We begin with the raw amino-acid sequence, 518 residues long: Metalloprotease TIKI2 (518 aa).

The first 22 residues, 1 to 22 (MNCQSGLRWLVTLCAFFQVGSA), serve as a signal peptide directing secretion. The Extracellular portion of the chain corresponds to 23–499 (RDTHESTRQC…SALDSAAPNP (477 aa)). N224, N233, N282, N325, and N340 each carry an N-linked (GlcNAc...) asparagine glycan. A helical membrane pass occupies residues 500-517 (TYALTCFLACLISQLLFA). Residue S518 is a topological domain, cytoplasmic.

The protein belongs to the TIKI family. Mn(2+) is required as a cofactor. It depends on Co(2+) as a cofactor.

It localises to the cell membrane. Functionally, metalloprotease that acts as a negative regulator of the Wnt signaling pathway by mediating the cleavage of the N-terminal residues of a subset of Wnt proteins. Following cleavage, Wnt proteins become oxidized and form large disulfide-bond oligomers, leading to their inactivation. This is Metalloprotease TIKI2 (trabd2b) from Danio rerio (Zebrafish).